The following is a 210-amino-acid chain: Thymidylate kinase (210 aa).

10–17 (GPEGAGKS) contributes to the ATP binding site.

The protein belongs to the thymidylate kinase family.

The catalysed reaction is dTMP + ATP = dTDP + ADP. Functionally, phosphorylation of dTMP to form dTDP in both de novo and salvage pathways of dTTP synthesis. The protein is Thymidylate kinase of Pseudomonas syringae pv. syringae (strain B728a).